The following is a 1408-amino-acid chain: DNA-directed RNA polymerase subunit beta' (1408 aa).

Positions 70, 72, 85, and 88 each coordinate Zn(2+). 3 residues coordinate Mg(2+): aspartate 460, aspartate 462, and aspartate 464. Positions 814, 888, 895, and 898 each coordinate Zn(2+).

This sequence belongs to the RNA polymerase beta' chain family. The RNAP catalytic core consists of 2 alpha, 1 beta, 1 beta' and 1 omega subunit. When a sigma factor is associated with the core the holoenzyme is formed, which can initiate transcription. The cofactor is Mg(2+). Requires Zn(2+) as cofactor.

It catalyses the reaction RNA(n) + a ribonucleoside 5'-triphosphate = RNA(n+1) + diphosphate. Functionally, DNA-dependent RNA polymerase catalyzes the transcription of DNA into RNA using the four ribonucleoside triphosphates as substrates. This Baumannia cicadellinicola subsp. Homalodisca coagulata protein is DNA-directed RNA polymerase subunit beta'.